A 459-amino-acid polypeptide reads, in one-letter code: Phosphoglucosamine mutase (459 aa).

The Phosphoserine intermediate role is filled by Ser106. Positions 106, 247, 249, and 251 each coordinate Mg(2+). Ser106 bears the Phosphoserine mark.

The protein belongs to the phosphohexose mutase family. Mg(2+) is required as a cofactor. Activated by phosphorylation.

The enzyme catalyses alpha-D-glucosamine 1-phosphate = D-glucosamine 6-phosphate. In terms of biological role, catalyzes the conversion of glucosamine-6-phosphate to glucosamine-1-phosphate. The sequence is that of Phosphoglucosamine mutase from Chlamydia muridarum (strain MoPn / Nigg).